The sequence spans 114 residues: Beta-microseminoprotein J1 (114 aa).

The first 20 residues, 1–20, serve as a signal peptide directing secretion; that stretch reads MNVLLGGLVIFATFVTLCNA. Disulfide bonds link Cys-22–Cys-70, Cys-38–Cys-62, Cys-57–Cys-93, Cys-60–Cys-69, and Cys-84–Cys-107.

It belongs to the beta-microseminoprotein family.

The protein resides in the secreted. The protein is Beta-microseminoprotein J1 (MSPJ) of Saguinus oedipus (Cotton-top tamarin).